A 116-amino-acid chain; its full sequence is Large ribosomal subunit protein eL30 (116 aa).

Belongs to the eukaryotic ribosomal protein eL30 family. In terms of assembly, component of the large ribosomal subunit.

It is found in the cytoplasm. Its function is as follows. Component of the large ribosomal subunit. The ribosome is a large ribonucleoprotein complex responsible for the synthesis of proteins in the cell. The protein is Large ribosomal subunit protein eL30 (rpl30) of Ictalurus punctatus (Channel catfish).